Here is a 734-residue protein sequence, read N- to C-terminus: Adhesion G protein-coupled receptor E5 (734 aa).

The N-terminal stretch at 1–26 (MGGPHGGPFLLFHVLCFLLTLSEVGS) is a signal peptide. Residues 27–449 (QNSKACALPC…VEDPKLALIT (423 aa)) lie on the Extracellular side of the membrane. Residues 28–70 (NSKACALPCPPNSSCVNGTACRCAPGFISFSGEIFTDPLESCD) form the EGF-like 1 domain. 9 disulfide bridges follow: Cys32/Cys42, Cys36/Cys48, Cys50/Cys69, Cys75/Cys89, Cys83/Cys98, Cys100/Cys121, Cys127/Cys140, Cys134/Cys149, and Cys151/Cys170. N-linked (GlcNAc...) asparagine glycosylation is found at Asn39 and Asn44. The EGF-like 2; calcium-binding domain occupies 71–122 (DINECGPPSPVDCGSSADCQNTEGGYYCTCSPGYEPVSGAMIFRNESENTCR). 2 N-linked (GlcNAc...) asparagine glycosylation sites follow: Asn115 and Asn136. The 49-residue stretch at 123-171 (DVDECSSGQHQCHNSTVCFNTVGSYTCHCREGWEPKHGLKNKQKDTICK) folds into the EGF-like 3; calcium-binding domain. The region spanning 265–441 (TYRSLDNTEL…AILMAHYDVE (177 aa)) is the GAIN-B domain. N-linked (GlcNAc...) asparagine glycosylation is found at Asn285, Asn327, Asn372, Asn403, and Asn418. Cystine bridges form between Cys393/Cys423 and Cys411/Cys425. The GPS stretch occupies residues 393–441 (CAFWKKDSNGNGSWATTGCWKMGRGNGSITCQCSHLSSFAILMAHYDVE). A helical membrane pass occupies residues 450-470 (KVGLALSLACLLLCILTFLLV). The Cytoplasmic segment spans residues 471–478 (RPIQGSRT). The chain crosses the membrane as a helical span at residues 479–499 (TVHLHLCICLFVGSAIFLAGI). The Extracellular segment spans residues 500 to 519 (ENEGGEVGTRCRLVAVLLHY). The chain crosses the membrane as a helical span at residues 520–540 (CFLAAFCWMSLEGVELYFLVV). Over 541-550 (RVFQGQGMRK) the chain is Cytoplasmic. The helical transmembrane segment at 551–571 (LWLCLIGYGVPLIIVGISAGA) threads the bilayer. Residues 572-593 (YSKGYGREKFCWLNFEGGFLWS) are Extracellular-facing. The helical transmembrane segment at 594 to 614 (FVGPVTFIVLGNAIIFVITVW) threads the bilayer. Residues 615 to 637 (KLTQKFSEINPDIKKLKKARVLT) are Cytoplasmic-facing. A helical membrane pass occupies residues 638–658 (ITAIAQLFVLGCTWVFGLLLF). The Extracellular segment spans residues 659–662 (NPES). A helical membrane pass occupies residues 663–683 (WVLSYIFSILNCLQGFFLFVL). Residues 684–734 (YCLLNKKVREEYRKWACMVAGNKYSEFATTTSGSGSSHNQTQALRPSESGM) lie on the Cytoplasmic side of the membrane. The interval 712–734 (TTTSGSGSSHNQTQALRPSESGM) is disordered. At Thr713 the chain carries Phosphothreonine. Ser715 bears the Phosphoserine mark. Thr724 is subject to Phosphothreonine. Phosphoserine is present on residues Ser730 and Ser732.

Belongs to the G-protein coupled receptor 2 family. LN-TM7 subfamily. As to quaternary structure, forms a heterodimer, consisting of a large extracellular region (alpha subunit) non-covalently linked to a seven-transmembrane moiety (beta subunit). Interacts with complement decay-accelerating factor (DAF) and with chondroitin sulfate. Post-translationally, proteolytically cleaved into 2 subunits, an extracellular alpha subunit and a seven-transmembrane subunit.

It is found in the cell membrane. The protein resides in the secreted. Its subcellular location is the extracellular space. Functionally, receptor potentially involved in both adhesion and signaling processes early after leukocyte activation. Plays an essential role in leukocyte migration. This chain is Adhesion G protein-coupled receptor E5, found in Bos taurus (Bovine).